The following is a 294-amino-acid chain: 4-hydroxy-tetrahydrodipicolinate synthase (294 aa).

Position 47 (Thr47) interacts with pyruvate. The Proton donor/acceptor role is filled by Tyr135. Lys163 acts as the Schiff-base intermediate with substrate in catalysis. A pyruvate-binding site is contributed by Thr205.

The protein belongs to the DapA family. In terms of assembly, homotetramer; dimer of dimers.

The protein resides in the cytoplasm. It catalyses the reaction L-aspartate 4-semialdehyde + pyruvate = (2S,4S)-4-hydroxy-2,3,4,5-tetrahydrodipicolinate + H2O + H(+). The protein operates within amino-acid biosynthesis; L-lysine biosynthesis via DAP pathway; (S)-tetrahydrodipicolinate from L-aspartate: step 3/4. Catalyzes the condensation of (S)-aspartate-beta-semialdehyde [(S)-ASA] and pyruvate to 4-hydroxy-tetrahydrodipicolinate (HTPA). This chain is 4-hydroxy-tetrahydrodipicolinate synthase, found in Rickettsia montanensis.